The sequence spans 286 residues: Aspartate/glutamate leucyltransferase (286 aa).

Belongs to the R-transferase family. Bpt subfamily.

The protein localises to the cytoplasm. The catalysed reaction is N-terminal L-glutamyl-[protein] + L-leucyl-tRNA(Leu) = N-terminal L-leucyl-L-glutamyl-[protein] + tRNA(Leu) + H(+). The enzyme catalyses N-terminal L-aspartyl-[protein] + L-leucyl-tRNA(Leu) = N-terminal L-leucyl-L-aspartyl-[protein] + tRNA(Leu) + H(+). Its function is as follows. Functions in the N-end rule pathway of protein degradation where it conjugates Leu from its aminoacyl-tRNA to the N-termini of proteins containing an N-terminal aspartate or glutamate. The polypeptide is Aspartate/glutamate leucyltransferase (Jannaschia sp. (strain CCS1)).